The sequence spans 619 residues: TOX high mobility group box family member 4 (619 aa).

Disordered stretches follow at residues L155–V227 and D306–P335. Residue T176 is modified to Phosphothreonine. Phosphoserine occurs at positions 178 and 182. Over residues L183–R193 the composition is skewed to basic and acidic residues. Basic residues predominate over residues K208–K218. A Nuclear localization signal motif is present at residues K213–K218. Residues P223 to K291 constitute a DNA-binding region (HMG box). At T313 the chain carries Phosphothreonine. A Phosphoserine modification is found at S315. The segment covering T320–P335 has biased composition (low complexity). R479 is modified (asymmetric dimethylarginine). A phosphoserine mark is found at S531, S548, S550, S558, S560, and S565.

Component of the PNUTS-PP1 phosphatase complex, composed of PPP1R10/PNUTS, TOX4, WDR82 and PPP1CA or PPP1CB or PPP1CC. Interacts with PPP1R10/PNUTS. Interacts with FOXO1 and CREB1 (increased by cAMP); FOXO1 and CREB1 are required for full induction of TOX4-dependent activity and the interactions are inhibited by insulin.

The protein localises to the nucleus. Its subcellular location is the chromosome. With respect to regulation, in liver, recruited to target gene promoters following treatment with dexamethasone and cAMP. Binding is decreased in presence of insulin. In terms of biological role, transcription factor that modulates cell fate reprogramming from the somatic state to the pluripotent and neuronal fate. In liver, controls the expression of hormone-regulated gluconeogenic genes such as G6PC1 and PCK1. This regulation is independent of the insulin receptor activation. Also acts as a regulatory component of protein phosphatase 1 (PP1) complexes. Component of the PNUTS-PP1 protein phosphatase complex, a PP1 complex that regulates RNA polymerase II transcription pause-release. PNUTS-PP1 also plays a role in the control of chromatin structure and cell cycle progression during the transition from mitosis into interphase. This Mus musculus (Mouse) protein is TOX high mobility group box family member 4.